The chain runs to 227 residues: E3 ubiquitin-protein ligase RNF186 (227 aa).

The RING-type zinc-finger motif lies at 40-86 (CLVCREPYSCPRLPKLLACQHAFCAICLKLLLCVQDNTWSITCPLCR). A run of 2 helical transmembrane segments spans residues 158–178 (HLLLLALLIILIGPFIYPGVL) and 180–200 (WVLTFIIALALLMSTLFCCLP).

In terms of assembly, interacts with BNIP1. Post-translationally, polyubiquitinated. 'Lys-29'-linked autoubiquitination leads to proteasomal degradation.

Its subcellular location is the endoplasmic reticulum membrane. The enzyme catalyses S-ubiquitinyl-[E2 ubiquitin-conjugating enzyme]-L-cysteine + [acceptor protein]-L-lysine = [E2 ubiquitin-conjugating enzyme]-L-cysteine + N(6)-ubiquitinyl-[acceptor protein]-L-lysine.. It functions in the pathway protein modification; protein ubiquitination. Its function is as follows. E3 ubiquitin protein ligase that is part of an apoptotic signaling pathway activated by endoplasmic reticulum stress. Stimulates the expression of proteins specific of the unfolded protein response (UPR), ubiquitinates BNIP1 and regulates its localization to the mitochondrion and induces calcium release from the endoplasmic reticulum that ultimately leads to cell apoptosis. Plays a role in the maintenance of intestinal homeostasis and clearance of enteric pathogens. Upon NOD2 stimulation, ubiquitinates the ER stress sensor activating transcription factor 6/ATF6 and promotes the unfolded protein response UPR. Participates in basal level of autophagy maintenance by regulating the ubiquitination of EPHB2 and EPHB3. Upon stimulation by ligand EFNB1, ubiquitinates EPHB2 and further recruits MAP1LC3B for autophagy induction. Controls nutrient sensing by ubiquitinating Sestrin-2/SESN2, which is an intracellular sensor of cytosolic leucine and inhibitor of mTORC1 activity. In Homo sapiens (Human), this protein is E3 ubiquitin-protein ligase RNF186.